The primary structure comprises 115 residues: Large ribosomal subunit protein bL20 (115 aa).

Belongs to the bacterial ribosomal protein bL20 family.

Binds directly to 23S ribosomal RNA and is necessary for the in vitro assembly process of the 50S ribosomal subunit. It is not involved in the protein synthesizing functions of that subunit. In Synechococcus sp. (strain CC9605), this protein is Large ribosomal subunit protein bL20.